We begin with the raw amino-acid sequence, 428 residues long: MTEVQSITTSGEIKMPLSPSSSSSSISSSTTNNTNIKSIPILSQCYSFSGKGNGKELQDKIFRQNSRHSNGGWKFVDDIELKKQRGVCWSLVKSVGNSIIEGKELTSTCLPIELFEARSFLEKVTDTMAFGPLYLKAAAETNDPIERMKMVASFVVSGLHLTTTIAKPFNPLLGETFECDLADGSSAFCEQISHHPPISSWKLLEKDGKYKYTGHFIWSAGCRGNVVKGCLKGPHNIEFADGTNIAFTYPDVLIKGIFWGDRVTEFCGKMLFTDEKNDLACELIFNPNALGFVKSFFSKQKTPCDTIDGRIFRINNNKIKDGNCDKINPDDVLCKMEGTWLTSFLIDQVEYWNIRMIPHGVIYRDPETTLPTDSGRRDDIKHLKMGNLEEAKKYKALIEDNQRKQKKEKDEKLKKDEKLKKEDKKNQK.

Polar residues predominate over residues 1 to 11 (MTEVQSITTSG). Disordered stretches follow at residues 1–32 (MTEVQSITTSGEIKMPLSPSSSSSSISSSTTN) and 396–428 (ALIEDNQRKQKKEKDEKLKKDEKLKKEDKKNQK). Residues 18–32 (SPSSSSSSISSSTTN) show a composition bias toward low complexity. Residues 389–422 (EEAKKYKALIEDNQRKQKKEKDEKLKKDEKLKKE) adopt a coiled-coil conformation.

It belongs to the OSBP family.

In Dictyostelium discoideum (Social amoeba), this protein is Oxysterol-binding protein 9 (osbI).